Consider the following 147-residue polypeptide: Transcriptional repressor NrdR (147 aa).

Residues 3 to 34 (CPYCGNVETTVVETRESDEGDAVRRRRRCSAC) fold into a zinc finger. The 91-residue stretch at 49–139 (PAVVKKNGDR…VYREFEDIDA (91 aa)) folds into the ATP-cone domain.

It belongs to the NrdR family. The cofactor is Zn(2+).

In terms of biological role, negatively regulates transcription of bacterial ribonucleotide reductase nrd genes and operons by binding to NrdR-boxes. The chain is Transcriptional repressor NrdR from Leptothrix cholodnii (strain ATCC 51168 / LMG 8142 / SP-6) (Leptothrix discophora (strain SP-6)).